Reading from the N-terminus, the 354-residue chain is Guanine nucleotide-binding protein alpha-12 subunit (354 aa).

A G-alpha domain is found at 31–354; it reads QPLKLLLLGS…SLLMNVAEIL (324 aa). The tract at residues 34–47 is G1 motif; sequence KLLLLGSGECGKST. GTP-binding positions include 39–46, 178–184, 203–207, 272–275, and A329; these read GSGECGKS, LRVRVKT, DVGGQ, and NKID. Residues S46 and T184 each contribute to the Mg(2+) site. Positions 176-184 are G2 motif; it reads DFLRVRVKT. Positions 199 to 208 are G3 motif; sequence FKLVDVGGQK. The segment at 268 to 275 is G4 motif; that stretch reads VLFFNKID. The tract at residues 327–332 is G5 motif; that stretch reads TCALDS.

This sequence belongs to the G-alpha family. As to quaternary structure, g proteins are composed of 3 units; alpha, beta and gamma. The alpha chain contains the guanine nucleotide binding site.

Guanine nucleotide-binding proteins (G proteins) are involved as modulators or transducers in various transmembrane signaling systems. This is Guanine nucleotide-binding protein alpha-12 subunit (gpaL) from Dictyostelium discoideum (Social amoeba).